The following is a 320-amino-acid chain: 3-hydroxybenzoate 6-hydroxylase 2 (320 aa).

Positions 1 to 25 (MRSTNTRSARSRPTKRSVNASATPT) are disordered. A compositionally biased stretch (polar residues) spans 16 to 25 (RSVNASATPT).

It belongs to the 3-hydroxybenzoate 6-hydroxylase family. Requires FAD as cofactor.

It catalyses the reaction 3-hydroxybenzoate + NADH + O2 + H(+) = 2,5-dihydroxybenzoate + NAD(+) + H2O. Catalyzes the conversion of 3-hydroxybenzoate to gentisate. This is 3-hydroxybenzoate 6-hydroxylase 2 (hbzD) from Aquipseudomonas alcaligenes (Pseudomonas alcaligenes).